Here is a 254-residue protein sequence, read N- to C-terminus: MSLTNKNVVFVAGLGGIGLDTSRELVKRDLKNLVILDRIDNAAAIAELKAINPKVTVTFYPYDVTVPVAETTKLLKTIFAQIKTIDVLINGAGILDDHQIERTIAVNYSGLVNTTTAILDFWDKRKGGPGGIICNIGSVTGFNAIYQVPVYSGSKAAVVNFTSSLAKLAPITGVTAYTVNPGITKTTLVHKFNSWLDVEPRVAEKLLEHPTQTSQQCAENFVKAIELNKNGAIWKLDLGTLESITWTKHWDSGI.

Phe-10–Leu-33 contributes to the NAD(+) binding site. Ser-138 lines the substrate pocket. Tyr-151 acts as the Proton acceptor in catalysis.

This sequence belongs to the short-chain dehydrogenases/reductases (SDR) family. Homodimer.

The enzyme catalyses a primary alcohol + NAD(+) = an aldehyde + NADH + H(+). The catalysed reaction is a secondary alcohol + NAD(+) = a ketone + NADH + H(+). The sequence is that of Alcohol dehydrogenase (Adh) from Drosophila subobscura (Fruit fly).